A 128-amino-acid chain; its full sequence is uncharacterized protein (128 aa).

The N-terminal stretch at 1-24 (MKMTKLTTLLLTATLGLASGAALA) is a signal peptide. 2 stretches are compositionally biased toward low complexity: residues 24–44 (AAESNAQSSNGQANSAANAGQ) and 52–70 (NVAPNDVNNNDINTNGNTN). Residues 24-128 (AAESNAQSSN…VNTKTDGTTQ (105 aa)) are disordered. The span at 71-82 (STMQHPDGSTMN) shows a compositional bias: polar residues. A compositionally biased stretch (basic and acidic residues) spans 85-110 (GMTKDEEHKNTMCKDGRCPDINKKVE). Over residues 113–128 (NGVNNDVNTKTDGTTQ) the composition is skewed to polar residues.

This is an uncharacterized protein from Salmonella typhi.